The primary structure comprises 107 residues: Small ribosomal subunit protein uS10m (107 aa).

This sequence belongs to the universal ribosomal protein uS10 family.

The protein localises to the mitochondrion. This is Small ribosomal subunit protein uS10m (RPS10) from Prototheca wickerhamii.